The sequence spans 253 residues: Ribonuclease PH (253 aa).

Phosphate-binding positions include Arg-86 and 124-126 (GTR).

The protein belongs to the RNase PH family. As to quaternary structure, homohexameric ring arranged as a trimer of dimers.

The catalysed reaction is tRNA(n+1) + phosphate = tRNA(n) + a ribonucleoside 5'-diphosphate. Functionally, phosphorolytic 3'-5' exoribonuclease that plays an important role in tRNA 3'-end maturation. Removes nucleotide residues following the 3'-CCA terminus of tRNAs; can also add nucleotides to the ends of RNA molecules by using nucleoside diphosphates as substrates, but this may not be physiologically important. Probably plays a role in initiation of 16S rRNA degradation (leading to ribosome degradation) during starvation. The protein is Ribonuclease PH of Brevibacillus brevis (strain 47 / JCM 6285 / NBRC 100599).